A 231-amino-acid chain; its full sequence is NADH-ubiquinone oxidoreductase chain 4 (231 aa).

A run of 7 helical transmembrane segments spans residues 1 to 21, 34 to 54, 63 to 85, 89 to 111, 128 to 148, 156 to 176, and 211 to 231; these read PIAG…YGII, MFLP…LTCL, IAYS…TPWG, AMAL…NTTY, ILPM…AIPP, LLIM…LGLS, and LLMI…ELII.

It belongs to the complex I subunit 4 family.

Its subcellular location is the mitochondrion membrane. The enzyme catalyses a ubiquinone + NADH + 5 H(+)(in) = a ubiquinol + NAD(+) + 4 H(+)(out). Its function is as follows. Core subunit of the mitochondrial membrane respiratory chain NADH dehydrogenase (Complex I) that is believed to belong to the minimal assembly required for catalysis. Complex I functions in the transfer of electrons from NADH to the respiratory chain. The immediate electron acceptor for the enzyme is believed to be ubiquinone. The sequence is that of NADH-ubiquinone oxidoreductase chain 4 (MT-ND4) from Agkistrodon piscivorus piscivorus (Eastern cottonmouth).